Reading from the N-terminus, the 283-residue chain is Pantothenate synthetase (283 aa).

30-37 serves as a coordination point for ATP; that stretch reads MGNLHAGH. Histidine 37 acts as the Proton donor in catalysis. Position 61 (glutamine 61) interacts with (R)-pantoate. Beta-alanine is bound at residue glutamine 61. Residue 149–152 participates in ATP binding; sequence GEKD. Glutamine 155 provides a ligand contact to (R)-pantoate. Residues valine 178 and 186–189 contribute to the ATP site; that span reads LSSR.

It belongs to the pantothenate synthetase family. In terms of assembly, homodimer.

The protein localises to the cytoplasm. It catalyses the reaction (R)-pantoate + beta-alanine + ATP = (R)-pantothenate + AMP + diphosphate + H(+). It functions in the pathway cofactor biosynthesis; (R)-pantothenate biosynthesis; (R)-pantothenate from (R)-pantoate and beta-alanine: step 1/1. Catalyzes the condensation of pantoate with beta-alanine in an ATP-dependent reaction via a pantoyl-adenylate intermediate. The sequence is that of Pantothenate synthetase from Azotobacter vinelandii (strain DJ / ATCC BAA-1303).